Reading from the N-terminus, the 400-residue chain is Lipase member N (400 aa).

Residues 1 to 19 (MPMMWLFLTTACLIPGTLS) form the signal peptide. In terms of domain architecture, AB hydrolase-1 spans 81 to 381 (PVVYMQHALF…DWNHFDFVWG (301 aa)). The active-site Nucleophile is Ser175. Cysteines 249 and 258 form a disulfide. Asn274 carries N-linked (GlcNAc...) asparagine glycosylation. Residues Asp346 and His375 each act as charge relay system in the active site.

It belongs to the AB hydrolase superfamily. Lipase family. As to expression, highly expressed in the epidermis. Also detected in other tissues, although at much lower levels, including liver and kidney.

It localises to the secreted. It catalyses the reaction a sterol ester + H2O = a sterol + a fatty acid + H(+). The enzyme catalyses a triacylglycerol + H2O = a 1,2-diacylglycerol + a fatty acid + H(+). It carries out the reaction a triacylglycerol + H2O = a diacylglycerol + a fatty acid + H(+). The catalysed reaction is a cholesterol ester + H2O = cholesterol + a fatty acid + H(+). Its function is as follows. Plays a highly specific role in the last step of keratinocyte differentiation. Contains two distinct domains: the alpha/beta hydrolase fold and the abhydrolase-associated lipase region, also features the consensus sequence of the active site of a genuine lipase. May have an essential function in lipid metabolism of the most differentiated epidermal layers. The protein is Lipase member N (Lipn) of Mus musculus (Mouse).